An 80-amino-acid polypeptide reads, in one-letter code: MTLEEKIIEIIVDQLEVTAEECVPEASFINDLGADSLDLAELLLEMEDTFDVEISTEDLKKIRKIQDVIDYLKVRNVTWD.

Residues 1–76 (MTLEEKIIEI…DVIDYLKVRN (76 aa)) form the Carrier domain. Ser-36 is modified (O-(pantetheine 4'-phosphoryl)serine).

The protein belongs to the acyl carrier protein (ACP) family. 4'-phosphopantetheine is transferred from CoA to a specific serine of apo-ACP by AcpS. This modification is essential for activity because fatty acids are bound in thioester linkage to the sulfhydryl of the prosthetic group.

The protein resides in the cytoplasm. The protein operates within lipid metabolism; fatty acid biosynthesis. Its function is as follows. Carrier of the growing fatty acid chain in fatty acid biosynthesis. The chain is Acyl carrier protein from Syntrophus aciditrophicus (strain SB).